An 83-amino-acid chain; its full sequence is Apolipoprotein C-I (83 aa).

An N-terminal signal peptide occupies residues 1–26 (MRLILSLPVLAVVLAMVLEGPAPAQA).

The protein belongs to the apolipoprotein C1 family.

It is found in the secreted. In terms of biological role, inhibitor of lipoprotein binding to the low density lipoprotein (LDL) receptor, LDL receptor-related protein, and very low density lipoprotein (VLDL) receptor. Associates with high density lipoproteins (HDL) and the triacylglycerol-rich lipoproteins in the plasma and makes up about 10% of the protein of the VLDL and 2% of that of HDL. Appears to interfere directly with fatty acid uptake and is also the major plasma inhibitor of cholesteryl ester transfer protein (CETP). Binds free fatty acids and reduces their intracellular esterification. Modulates the interaction of APOE with beta-migrating VLDL and inhibits binding of beta-VLDL to the LDL receptor-related protein. The chain is Apolipoprotein C-I (APOC1) from Eonycteris spelaea (Lesser dawn bat).